The primary structure comprises 236 residues: Small ribosomal subunit protein uS2c (236 aa).

This sequence belongs to the universal ribosomal protein uS2 family.

Its subcellular location is the plastid. It localises to the chloroplast. The protein is Small ribosomal subunit protein uS2c (rps2) of Oenothera biennis (German evening primrose).